The chain runs to 389 residues: MLLALAQWLQGDASFLRLFTYLTFRAVMATITALGIGLVCGPWVIRKLTQMKVGQAVRKDGPQSHLVKSGTPTMGGVLILIGIAVATLLWGDLTNRFIWIVMLVTFGFGVIGWVDDYRKVVHKDPRGMSSREKYFWQSVIGLFAAVYLAFSVSEANNVRVLDLFMAWVRSGLSMGLPARADLMLPFLKSISYPLGVWGFIVLTYFVIVGASNAVNLTDGLDGLVIMPVVLVGASLGVFAYVMGSSVYSKYLLFPHIPGAGELLIFCSAMGGAGLAFLWYNTHPAQVFMGDVGALALGGALGTVAVIVRQEIVLFIMGGIFVAETLSVMLQVSWFKYTKKRYGEGRRLLKMAPLHHHFELSGWKETQVVVRFWIITLMLCLFGLSTLKLR.

A run of 10 helical transmembrane segments spans residues arginine 25–isoleucine 45, threonine 73–leucine 93, phenylalanine 97–tyrosine 117, phenylalanine 135–alanine 155, isoleucine 190–alanine 210, glycine 222–methionine 242, glycine 258–tryptophan 278, valine 286–isoleucine 306, isoleucine 311–valine 331, and glutamine 366–leucine 386.

This sequence belongs to the glycosyltransferase 4 family. MraY subfamily. Mg(2+) serves as cofactor.

The protein localises to the cell inner membrane. The enzyme catalyses UDP-N-acetyl-alpha-D-muramoyl-L-alanyl-gamma-D-glutamyl-meso-2,6-diaminopimeloyl-D-alanyl-D-alanine + di-trans,octa-cis-undecaprenyl phosphate = di-trans,octa-cis-undecaprenyl diphospho-N-acetyl-alpha-D-muramoyl-L-alanyl-D-glutamyl-meso-2,6-diaminopimeloyl-D-alanyl-D-alanine + UMP. Its pathway is cell wall biogenesis; peptidoglycan biosynthesis. Functionally, catalyzes the initial step of the lipid cycle reactions in the biosynthesis of the cell wall peptidoglycan: transfers peptidoglycan precursor phospho-MurNAc-pentapeptide from UDP-MurNAc-pentapeptide onto the lipid carrier undecaprenyl phosphate, yielding undecaprenyl-pyrophosphoryl-MurNAc-pentapeptide, known as lipid I. The protein is Phospho-N-acetylmuramoyl-pentapeptide-transferase of Burkholderia vietnamiensis (strain G4 / LMG 22486) (Burkholderia cepacia (strain R1808)).